The following is an 895-amino-acid chain: Dystroglycan 1 (895 aa).

A signal peptide spans 1–29 (MRMSVGSAVPLPLWGRTFLLLLSVAVTQS). The tract at residues 30-408 (HWPSEPSEAV…SQIRPTMTIP (379 aa)) is required for laminin recognition. Residues 49-71 (SMHSALSDLHETVPTVVGIPDGT) are O-glycosylated at one site. An N-linked (GlcNAc...) asparagine glycan is attached at N141. A disulfide bridge links C182 with C264. Residues 316 to 485 (ATPTPVTAIG…PATRMRTTTS (170 aa)) form a mucin-like domain region. Residues T317, T319, and T379 are each glycosylated (O-linked (Man6P...) threonine). Residues 381–500 (TLGPIQPTRV…GEPNQRPELK (120 aa)) are disordered. Polar residues predominate over residues 393-403 (AGTTVPSQIRP). The span at 413 to 447 (PSTVTTPPTTTTKKPRVSTPRPATPSTDSSTTTTR) shows a compositional bias: low complexity. Positions 463–485 (TTKAPITRLETASPATRMRTTTS) are O-glycosylated at seven sites with GalNAc. The region spanning 603 to 712 (KAPARFKAKL…MSITVTGSGS (110 aa)) is the Peptidase S72 domain. N641, N649, and N661 each carry an N-linked (GlcNAc...) asparagine glycan. The Extracellular segment spans residues 654 to 749 (SIVVEWTNNT…DPEKSSEDDV (96 aa)). C669 and C713 are disulfide-bonded. The segment at 724–747 (PMRVPSEAPATEVPDRDPEKSSED) is disordered. Positions 736–747 (VPDRDPEKSSED) are enriched in basic and acidic residues. A helical membrane pass occupies residues 750–775 (YLHTVIPAVVVAAILLIAGIIAMICY). Residues 776 to 782 (RKKRKGK) carry the Nuclear localization signal motif. Over 776–895 (RKKRKGKLTL…YRSPPPYVPP (120 aa)) the chain is Cytoplasmic. T790 is modified (phosphothreonine). Residues 819-895 (LQEEKAPLPP…YRSPPPYVPP (77 aa)) form a required for interaction with CAV3 region. Positions 823–895 (KAPLPPPEYP…YRSPPPYVPP (73 aa)) are disordered. Residues 832 to 846 (PNQSMPETTPLNQDT) show a composition bias toward polar residues. Residues 859–870 (SAPPYQPPPPFT) are compositionally biased toward pro residues. A required for binding DMD and UTRN region spans residues 880 to 895 (PKNMTPYRSPPPYVPP). A PPXY motif motif is present at residues 889–892 (PPPY). Position 892 is a phosphotyrosine; by SRC (Y892).

As to quaternary structure, monomer. Heterodimer of alpha- and beta-dystroglycan subunits which are the central components of the dystrophin-glycoprotein complex. This complex then can form a dystrophin-associated glycoprotein complex (DGC) which is composed of three subcomplexes: a cytoplasmic complex comprised of DMD (or UTRN), DTNA and a number of syntrophins, such as SNTB1, SNTB2, SNTG1 and SNTG2, the transmembrane dystroglycan complex, and the sarcoglycan-sarcospan complex. Interacts (via the N-terminal of alphaDAG1) with LARGE1; the interaction enhances laminin binding. Interacts with SGCD. Interacts with AGR2 and AGR3. Interacts (betaDAG1) with DMD; the interaction is inhibited by phosphorylation on the PPXY motif. Interacts (betaDAG1, via its PPXY motif) with UTRN (via its WWW and ZZ domains); the interaction is inhibited by phosphorylation on the PPXY motif. Interacts (betaDAG1, via its phosphorylated PPXY motif) with the SH2 domain-containing proteins, FYN, CSK, NCK and SHC. Interacts (betaDAG1) with CAV3 (via a central WW-like domain); the interaction disrupts the binding of DMD. BetaDAG1 directly interacts with ANK3, but not with ANK2; this interaction does not interfere with DMD-binding and is required for retention at costameres. Identified in a dystroglycan complex that contains at least PRX, DRP2, UTRN, DMD and DAG1. Interacts with POMGNT1. BetaDAG1 interacts with CD93. In terms of processing, O-glycosylated. POMGNT1 catalyzes the initial addition of N-acetylglucosamine, giving rise to the GlcNAc(beta1-2)Man(alpha1-)O-Ser/Thr moiety and thus providing the necessary basis for the addition of further carbohydrate moieties. Heavily O-glycosylated comprising of up to two thirds of its mass and the carbohydrate composition differs depending on tissue type. Mucin-type O-glycosylation is important for ligand binding activity. O-mannosylation is found in high abundance in both brain and muscle where the most abundant glycan is Sia-alpha-2-3-Gal-beta-1-4-Glc-NAc-beta-1-2-Man. In muscle, glycosylation on Thr-317, Thr-319 and Thr-379 by a phosphorylated O-mannosyl glycan with the structure 2-(N-acetylamido)-2-deoxygalactosyl-beta-1,3-2-(N-acetylamido)-2-deoxyglucosyl-beta-1,4-6-phosphomannose is mediated by like-acetylglucosaminyltransferase (LARGE1) protein amd is required for laminin binding. O-glycosylated in the N-terminal region with a core 1 or possibly core 8 glycan. The brain form displays a unique glycosylation pattern which is absent in other tissues; this form shows enhanced binding to laminin LAMA5 compared to the skeletal muscle form. Post-translationally, N-glycosylated. Autolytic cleavage produces the alpha and beta subunits. In cutaneous cells, as well as in certain pathological conditions, shedding of beta-dystroglycan can occur releasing a peptide of about 30 kDa. In terms of processing, SRC-mediated phosphorylation of the PPXY motif of the beta subunit recruits SH2 domain-containing proteins, but inhibits binding to WWW domain-containing proteins, DMD and UTRN. This phosphorylation also inhibits nuclear entry. In terms of tissue distribution, expressed in brain (at protein level). Expressed in the myelin sheath of peripheral nerves.

It localises to the secreted. It is found in the extracellular space. The protein localises to the cell membrane. The protein resides in the cytoplasm. Its subcellular location is the cytoskeleton. It localises to the nucleus. It is found in the nucleoplasm. The protein localises to the sarcolemma. The protein resides in the postsynaptic cell membrane. The dystroglycan complex is involved in a number of processes including laminin and basement membrane assembly, sarcolemmal stability, cell survival, peripheral nerve myelination, nodal structure, cell migration, and epithelial polarization. Its function is as follows. Extracellular peripheral glycoprotein that acts as a receptor for extracellular matrix proteins containing laminin-G domains. Receptor for laminin-2 (LAMA2) and agrin in peripheral nerve Schwann cells. Also acts as a receptor for laminin LAMA5. Functionally, transmembrane protein that plays important roles in connecting the extracellular matrix to the cytoskeleton. Acts as a cell adhesion receptor in both muscle and non-muscle tissues. Receptor for both DMD and UTRN and, through these interactions, scaffolds axin to the cytoskeleton. Also functions in cell adhesion-mediated signaling and implicated in cell polarity. This is Dystroglycan 1 from Bos taurus (Bovine).